Here is a 471-residue protein sequence, read N- to C-terminus: 3-isopropylmalate dehydratase large subunit (471 aa).

[4Fe-4S] cluster-binding residues include cysteine 347, cysteine 407, and cysteine 410.

It belongs to the aconitase/IPM isomerase family. LeuC type 1 subfamily. Heterodimer of LeuC and LeuD. It depends on [4Fe-4S] cluster as a cofactor.

It carries out the reaction (2R,3S)-3-isopropylmalate = (2S)-2-isopropylmalate. It functions in the pathway amino-acid biosynthesis; L-leucine biosynthesis; L-leucine from 3-methyl-2-oxobutanoate: step 2/4. In terms of biological role, catalyzes the isomerization between 2-isopropylmalate and 3-isopropylmalate, via the formation of 2-isopropylmaleate. The sequence is that of 3-isopropylmalate dehydratase large subunit from Granulibacter bethesdensis (strain ATCC BAA-1260 / CGDNIH1).